The primary structure comprises 63 residues: Large ribosomal subunit protein eL37 (63 aa).

The Zn(2+) site is built by cysteine 20, cysteine 23, cysteine 35, and cysteine 38. A C4-type zinc finger spans residues 20 to 38 (CRRCGRHSFNVRKGYCVAC).

This sequence belongs to the eukaryotic ribosomal protein eL37 family. Zn(2+) is required as a cofactor.

Functionally, binds to the 23S rRNA. The sequence is that of Large ribosomal subunit protein eL37 from Ignicoccus hospitalis (strain KIN4/I / DSM 18386 / JCM 14125).